A 254-amino-acid chain; its full sequence is PSME3-interacting protein (254 aa).

N-acetylmethionine is present on Met1. A Phosphoserine modification is found at Ser17. Basic and acidic residues predominate over residues 22–39 (DERRKRRQEEWEKVRKPE). The tract at residues 22–52 (DERRKRRQEEWEKVRKPEDPEECPEEVYDPR) is disordered. N6-acetyllysine is present on Lys139. Residues 155-195 (GAVKHKSSESGNSVKRLKPDPEPDDKNQEPSSCKSLGNTSL) are disordered. Basic and acidic residues predominate over residues 171 to 182 (LKPDPEPDDKNQ). Residues 183–195 (EPSSCKSLGNTSL) show a composition bias toward polar residues. Positions 201–254 (HCPSAAVCIGILPGLGAYSGSSDSESSSDSEGTINATGKIVSSIFRTNTFLEAP) are interaction with PSME3. 2 positions are modified to phosphoserine; by CK2: Ser222 and Ser228.

As to quaternary structure, interacts (via C-terminus) with both free and 20S proteasome-bound forms of the proteasome activator complex subunit PSME3; the interaction is direct. Post-translationally, phosphorylation by CK2 stabilizes the interaction with PSME3.

It is found in the nucleus. In terms of biological role, promotes the association of the proteasome activator complex subunit PSME3 with the 20S proteasome and regulates its activity. Inhibits PSME3-mediated degradation of some proteasome substrates, probably by affecting their diffusion rate into the catalytic chamber of the proteasome. Also inhibits the interaction of PSME3 with COIL, inhibits accumulation of PSME3 in Cajal bodies and positively regulates the number of Cajal bodies in the nucleus. This Homo sapiens (Human) protein is PSME3-interacting protein.